The chain runs to 396 residues: Septu protein PtuA (396 aa).

In terms of biological role, component of antiviral defense system Septu type I, composed of PtuA and PtuB. Expression of Septu type I in B.subtilis (strain BEST7003) confers resistance to phages SBSphiC and SBSphiJ. May be an ATPase. This chain is Septu protein PtuA, found in Bacillus thuringiensis.